A 743-amino-acid polypeptide reads, in one-letter code: Phosphoribosylformylglycinamidine synthase subunit PurL (743 aa).

His50 is a catalytic residue. Residues Tyr53 and Lys92 each coordinate ATP. Residue Glu94 coordinates Mg(2+). Residues 95–98 (SHNH) and Arg117 each bind substrate. The active-site Proton acceptor is the His96. Asp118 is a binding site for Mg(2+). A substrate-binding site is contributed by Gln241. Asp269 is a Mg(2+) binding site. Substrate is bound at residue 313–315 (ESQ). Asp494 and Gly531 together coordinate ATP. Asn532 provides a ligand contact to Mg(2+). Ser534 lines the substrate pocket.

This sequence belongs to the FGAMS family. Monomer. Part of the FGAM synthase complex composed of 1 PurL, 1 PurQ and 2 PurS subunits.

The protein resides in the cytoplasm. The enzyme catalyses N(2)-formyl-N(1)-(5-phospho-beta-D-ribosyl)glycinamide + L-glutamine + ATP + H2O = 2-formamido-N(1)-(5-O-phospho-beta-D-ribosyl)acetamidine + L-glutamate + ADP + phosphate + H(+). The protein operates within purine metabolism; IMP biosynthesis via de novo pathway; 5-amino-1-(5-phospho-D-ribosyl)imidazole from N(2)-formyl-N(1)-(5-phospho-D-ribosyl)glycinamide: step 1/2. In terms of biological role, part of the phosphoribosylformylglycinamidine synthase complex involved in the purines biosynthetic pathway. Catalyzes the ATP-dependent conversion of formylglycinamide ribonucleotide (FGAR) and glutamine to yield formylglycinamidine ribonucleotide (FGAM) and glutamate. The FGAM synthase complex is composed of three subunits. PurQ produces an ammonia molecule by converting glutamine to glutamate. PurL transfers the ammonia molecule to FGAR to form FGAM in an ATP-dependent manner. PurS interacts with PurQ and PurL and is thought to assist in the transfer of the ammonia molecule from PurQ to PurL. The sequence is that of Phosphoribosylformylglycinamidine synthase subunit PurL from Sinorhizobium fredii (strain HH103).